We begin with the raw amino-acid sequence, 349 residues long: Selenide, water dikinase (349 aa).

Cys17 is an active-site residue. Residues Lys20 and 48–50 (MAD) contribute to the ATP site. Asp51 is a Mg(2+) binding site. Residues Asp68, Asp91, and 139–141 (GHS) contribute to the ATP site. Asp91 contacts Mg(2+). Mg(2+) is bound at residue Asp227.

It belongs to the selenophosphate synthase 1 family. Class I subfamily. Homodimer. Mg(2+) is required as a cofactor.

It catalyses the reaction hydrogenselenide + ATP + H2O = selenophosphate + AMP + phosphate + 2 H(+). Functionally, synthesizes selenophosphate from selenide and ATP. The chain is Selenide, water dikinase from Rhizobium meliloti (strain 1021) (Ensifer meliloti).